Here is a 168-residue protein sequence, read N- to C-terminus: Lipoprotein signal peptidase (168 aa).

Helical transmembrane passes span 8–28 (TLLV…VVLL), 70–90 (KYFL…YLFF), and 104–124 (VLLC…GHIV). Residues D125 and D143 contribute to the active site. The helical transmembrane segment at 134–154 (WAFPTFNVADVLISLGTLLLV) threads the bilayer.

Belongs to the peptidase A8 family.

Its subcellular location is the cell inner membrane. It catalyses the reaction Release of signal peptides from bacterial membrane prolipoproteins. Hydrolyzes -Xaa-Yaa-Zaa-|-(S,diacylglyceryl)Cys-, in which Xaa is hydrophobic (preferably Leu), and Yaa (Ala or Ser) and Zaa (Gly or Ala) have small, neutral side chains.. It functions in the pathway protein modification; lipoprotein biosynthesis (signal peptide cleavage). In terms of biological role, this protein specifically catalyzes the removal of signal peptides from prolipoproteins. In Chlamydia pneumoniae (Chlamydophila pneumoniae), this protein is Lipoprotein signal peptidase.